Reading from the N-terminus, the 546-residue chain is Chaperonin GroEL 1 (546 aa).

Residues 30–33, Lys-51, 87–91, Gly-415, 479–481, and Asp-495 contribute to the ATP site; these read TLGP, DGTTT, and NAA.

The protein belongs to the chaperonin (HSP60) family. Forms a cylinder of 14 subunits composed of two heptameric rings stacked back-to-back. Interacts with the co-chaperonin GroES.

The protein resides in the cytoplasm. The enzyme catalyses ATP + H2O + a folded polypeptide = ADP + phosphate + an unfolded polypeptide.. In terms of biological role, together with its co-chaperonin GroES, plays an essential role in assisting protein folding. The GroEL-GroES system forms a nano-cage that allows encapsulation of the non-native substrate proteins and provides a physical environment optimized to promote and accelerate protein folding. The sequence is that of Chaperonin GroEL 1 from Vibrio vulnificus (strain CMCP6).